Here is a 425-residue protein sequence, read N- to C-terminus: Putative TRAP transporter large permease protein HI_1029 (425 aa).

13 helical membrane-spanning segments follow: residues Val-3–Ala-23, Leu-24–Ala-44, Phe-54–Leu-74, Leu-93–Ala-113, Leu-139–Phe-159, Lys-169–Trp-189, Val-217–Pro-237, Gly-241–Leu-261, Thr-275–Ala-295, Pro-312–Leu-332, Pro-334–Pro-354, Val-355–Gly-375, and Tyr-399–Met-419.

This sequence belongs to the TRAP transporter large permease family.

Its subcellular location is the cell inner membrane. This is Putative TRAP transporter large permease protein HI_1029 from Haemophilus influenzae (strain ATCC 51907 / DSM 11121 / KW20 / Rd).